The following is a 231-amino-acid chain: Large ribosomal subunit protein uL1 (231 aa).

This sequence belongs to the universal ribosomal protein uL1 family. Part of the 50S ribosomal subunit.

Functionally, binds directly to 23S rRNA. The L1 stalk is quite mobile in the ribosome, and is involved in E site tRNA release. In terms of biological role, protein L1 is also a translational repressor protein, it controls the translation of the L11 operon by binding to its mRNA. This chain is Large ribosomal subunit protein uL1, found in Allorhizobium ampelinum (strain ATCC BAA-846 / DSM 112012 / S4) (Agrobacterium vitis (strain S4)).